Here is a 424-residue protein sequence, read N- to C-terminus: UDP-N-acetylglucosamine 1-carboxyvinyltransferase (424 aa).

Residue 22-23 (KN) participates in phosphoenolpyruvate binding. Arg93 is a binding site for UDP-N-acetyl-alpha-D-glucosamine. Cys117 serves as the catalytic Proton donor. A 2-(S-cysteinyl)pyruvic acid O-phosphothioketal modification is found at Cys117. UDP-N-acetyl-alpha-D-glucosamine is bound by residues 122 to 126 (RPVDL), 162 to 165 (KVSV), Asp307, and Ile329.

Belongs to the EPSP synthase family. MurA subfamily.

The protein localises to the cytoplasm. The enzyme catalyses phosphoenolpyruvate + UDP-N-acetyl-alpha-D-glucosamine = UDP-N-acetyl-3-O-(1-carboxyvinyl)-alpha-D-glucosamine + phosphate. Its pathway is cell wall biogenesis; peptidoglycan biosynthesis. Functionally, cell wall formation. Adds enolpyruvyl to UDP-N-acetylglucosamine. This is UDP-N-acetylglucosamine 1-carboxyvinyltransferase from Haemophilus influenzae (strain PittGG).